A 210-amino-acid polypeptide reads, in one-letter code: MGVRAQQKEKTRRSLVEAAFSQLSAERSFASLSLREVAREAGIAPTSFYRHFRDVDELGLTMVDESGLMLRQLMRQARQRIAKGGSVIRTSVSTFMEFIGNNPNAFRLLLRERSGTSAAFRAAVAREIQHFIAELADYLELENHMPRAFTEAQAEAMVTIVFSAGAEALDVGAEQRRQLEERLVLQLRMIAKGAYYWYRREQEKMAHHSE.

Positions 10–70 (KTRRSLVEAA…TMVDESGLML (61 aa)) constitute an HTH tetR-type domain. Residues 33–52 (SLREVAREAGIAPTSFYRHF) constitute a DNA-binding region (H-T-H motif).

Homodimer.

The protein localises to the cytoplasm. Represses the transcription of fabB, involved in unsaturated fatty acid (UFA) biosynthesis. By controlling UFA production, FabR directly influences the physical properties of the membrane bilayer. This Citrobacter koseri (strain ATCC BAA-895 / CDC 4225-83 / SGSC4696) protein is HTH-type transcriptional repressor FabR.